The sequence spans 156 residues: Transcription antitermination protein NusB (156 aa).

It belongs to the NusB family.

In terms of biological role, involved in transcription antitermination. Required for transcription of ribosomal RNA (rRNA) genes. Binds specifically to the boxA antiterminator sequence of the ribosomal RNA (rrn) operons. This chain is Transcription antitermination protein NusB, found in Rickettsia felis (strain ATCC VR-1525 / URRWXCal2) (Rickettsia azadi).